The primary structure comprises 345 residues: tRNA N6-adenosine threonylcarbamoyltransferase (345 aa).

Residues histidine 109 and histidine 113 each coordinate Fe cation. Substrate contacts are provided by residues threonine 136–glycine 140, aspartate 169, glycine 182, aspartate 186, and asparagine 284. Aspartate 312 contacts Fe cation.

It belongs to the KAE1 / TsaD family. Requires Fe(2+) as cofactor.

It localises to the cytoplasm. The catalysed reaction is L-threonylcarbamoyladenylate + adenosine(37) in tRNA = N(6)-L-threonylcarbamoyladenosine(37) in tRNA + AMP + H(+). Required for the formation of a threonylcarbamoyl group on adenosine at position 37 (t(6)A37) in tRNAs that read codons beginning with adenine. Is involved in the transfer of the threonylcarbamoyl moiety of threonylcarbamoyl-AMP (TC-AMP) to the N6 group of A37, together with TsaE and TsaB. TsaD likely plays a direct catalytic role in this reaction. This chain is tRNA N6-adenosine threonylcarbamoyltransferase, found in Chlorobium phaeovibrioides (strain DSM 265 / 1930) (Prosthecochloris vibrioformis (strain DSM 265)).